The following is a 1480-amino-acid chain: Cystic fibrosis transmembrane conductance regulator (1480 aa).

At 1–77 the chain is on the cytoplasmic side; the sequence is MQRSPLEKAS…KLINALRRCF (77 aa). The chain crosses the membrane as a helical span at residues 78–98; it reads FWRFMFYGIFLYLGEVTKAVQ. Residues 81–365 form the ABC transmembrane type-1 1 domain; it reads FMFYGIFLYL…WAVQTWYDSL (285 aa). The Extracellular portion of the chain corresponds to 99–122; it reads PLLLGRIIASYDPDNKEERSIAIY. Residues 123-146 form a helical membrane-spanning segment; it reads LGIGLCLLFIVRTLLLHPAIFGLH. Residues 147 to 195 lie on the Cytoplasmic side of the membrane; that stretch reads HIGMQMRIAMFSLIYKKTLKLSSRVLDKISIGQLVSLLSNNLNKFDEGL. The chain crosses the membrane as a helical span at residues 196 to 216; sequence ALAHFVWIAPLQVALLMGLIW. Residues 217–222 lie on the Extracellular side of the membrane; sequence ELLQAS. The helical transmembrane segment at 223 to 243 threads the bilayer; the sequence is AFCGLGFLIVLALFQAGLGRM. Topologically, residues 244 to 298 are cytoplasmic; sequence MMKYRDQRAGKISERLVITSEMIENIQSVKAYCWEEAMEKMIENLRQTELKLTRK. The helical transmembrane segment at 299-319 threads the bilayer; the sequence is AAYVRYFNSSAFFFSGFFVVF. The Extracellular portion of the chain corresponds to 320 to 339; it reads LSVLPYALIKGIILRKIFTT. Residues 340–358 traverse the membrane as a helical segment; that stretch reads ISFCIVLRMAVTRQFPWAV. Residues 359-858 lie on the Cytoplasmic side of the membrane; the sequence is QTWYDSLGAI…YLRYITVHKS (500 aa). ATP-binding positions include W401, S434, 458–465, and Q493; that span reads GSTGAGKT. Positions 423 to 646 constitute an ABC transporter 1 domain; it reads NGDDSLFFSN…RPDFSSKLMG (224 aa). C524 carries the S-palmitoyl cysteine lipid modification. Residues S549 and S660 each carry the phosphoserine modification. Positions 654 to 831 are disordered R region; it reads SAERRNSILT…EEINEEDLKE (178 aa). S670 is subject to Phosphoserine; by PKA. Phosphoserine is present on S686. K688 participates in a covalent cross-link: Glycyl lysine isopeptide (Lys-Gly) (interchain with G-Cter in ubiquitin). 2 positions are modified to phosphoserine: S700 and S712. A Phosphothreonine modification is found at T717. A phosphoserine mark is found at S737, S753, S768, S790, S795, and S813. The helical transmembrane segment at 859–879 threads the bilayer; the sequence is LIFVLIWCLVIFLAEVAASLV. In terms of domain architecture, ABC transmembrane type-1 2 spans 859 to 1155; it reads LIFVLIWCLV…AVNSSIDVDS (297 aa). Residues 880 to 918 are Extracellular-facing; sequence VLWLLGNTPLQDKGNSTHSRNNSYAVIITSTSSYYVFYI. N894 and N900 each carry an N-linked (GlcNAc...) asparagine glycan. The discontinuously helical transmembrane segment at 919-939 threads the bilayer; it reads YVGVADTLLAMGFFRGLPLVH. Residues 940–990 lie on the Cytoplasmic side of the membrane; it reads TLITVSKILHHKMLHSVLQAPMSTLNTLKAGGILNRFSKDIAILDDLLPLT. Residues 991–1011 traverse the membrane as a helical segment; the sequence is IFDFIQLLLIVIGAIAVVAVL. Topologically, residues 1012–1013 are extracellular; it reads QP. The chain crosses the membrane as a helical span at residues 1014–1034; it reads YIFVATVPVIVAFIMLRAYFL. Residues 1035–1095 are Cytoplasmic-facing; sequence QTSQQLKQLE…TANWFLYLST (61 aa). The chain crosses the membrane as a helical span at residues 1096–1116; the sequence is LRWFQMRIEMIFVIFFIAVTF. Over 1117–1130 the chain is Extracellular; it reads ISILTTGEGEGRVG. The chain crosses the membrane as a helical span at residues 1131–1151; that stretch reads IILTLAMNIMSTLQWAVNSSI. Over 1152-1480 the chain is Cytoplasmic; sequence DVDSLMRSVS…TEEEVQDTRL (329 aa). An ABC transporter 2 domain is found at 1210–1443; that stretch reads MTVKDLTAKY…RSLFRQAISP (234 aa). Residues Y1219 and 1244-1251 contribute to the ATP site; that span reads GRTGSGKS. Positions 1386 to 1480 are interaction with GORASP2; the sequence is RTLKQAFADC…TEEEVQDTRL (95 aa). C1395 carries the S-palmitoyl cysteine lipid modification. Phosphoserine occurs at positions 1444 and 1456. The tract at residues 1452–1480 is disordered; the sequence is HRNSSKCKSKPQIAALKEETEEEVQDTRL. Positions 1470-1480 are enriched in acidic residues; it reads ETEEEVQDTRL. Residues 1478–1480 carry the PDZ-binding motif; that stretch reads TRL.

It belongs to the ABC transporter superfamily. ABCC family. CFTR transporter (TC 3.A.1.202) subfamily. Monomer; does not require oligomerization for channel activity. May form oligomers in the membrane. Interacts with SLC26A3, SLC26A6 and NHERF1. Interacts with SHANK2. Interacts with MYO6. Interacts (via C-terminus) with GOPC (via PDZ domain); this promotes CFTR internalization and thereby decreases channel activity. Interacts with SLC4A7 through NHERF1. Found in a complex with MYO5B and RAB11A. Interacts with ANO1. Interacts with SLC26A8. Interacts with AHCYL1; the interaction increases CFTR activity. Interacts with CSE1L. The core-glycosylated form interacts with GORASP2 (via PDZ GRASP-type 1 domain) in respone to ER stress. Interacts with MARCHF2; the interaction leads to CFTR ubiqtuitination and degradation. Interacts with ADGRG2. N-glycosylated. In terms of processing, phosphorylated; cAMP treatment promotes phosphorylation and activates the channel. Dephosphorylation decreases the ATPase activity (in vitro). Phosphorylation at PKA sites activates the channel. Phosphorylation at PKC sites enhances the response to phosphorylation by PKA. Phosphorylated by AMPK; this inhibits channel activity. Post-translationally, ubiquitinated, leading to its degradation in the lysosome. Deubiquitination by USP10 in early endosomes enhances its endocytic recycling to the cell membrane. Ubiquitinated by RNF185 during ER stress. Ubiquitinated by MARCHF2.

The protein resides in the apical cell membrane. It is found in the early endosome membrane. The protein localises to the cell membrane. Its subcellular location is the recycling endosome membrane. It localises to the endoplasmic reticulum membrane. The protein resides in the nucleus. It catalyses the reaction ATP + H2O + closed Cl(-) channel = ADP + phosphate + open Cl(-) channel.. It carries out the reaction chloride(in) = chloride(out). The catalysed reaction is hydrogencarbonate(in) = hydrogencarbonate(out). The enzyme catalyses ATP + H2O = ADP + phosphate + H(+). Functionally, epithelial ion channel that plays an important role in the regulation of epithelial ion and water transport and fluid homeostasis. Mediates the transport of chloride ions across the cell membrane. Possesses an intrinsic ATPase activity and utilizes ATP to gate its channel; the passive flow of anions through the channel is gated by cycles of ATP binding and hydrolysis by the ATP-binding domains. The ion channel is also permeable to HCO(3)(-); selectivity depends on the extracellular chloride concentration. Exerts its function also by modulating the activity of other ion channels and transporters. Contributes to the regulation of the pH and the ion content of the epithelial fluid layer. Modulates the activity of the epithelial sodium channel (ENaC) complex, in part by regulating the cell surface expression of the ENaC complex. May regulate bicarbonate secretion and salvage in epithelial cells by regulating the transporter SLC4A7. Can inhibit the chloride channel activity of ANO1. Plays a role in the chloride and bicarbonate homeostasis during sperm epididymal maturation and capacitation. This chain is Cystic fibrosis transmembrane conductance regulator, found in Pan troglodytes (Chimpanzee).